Reading from the N-terminus, the 185-residue chain is Ribosome-recycling factor (185 aa).

Belongs to the RRF family.

It localises to the cytoplasm. Its function is as follows. Responsible for the release of ribosomes from messenger RNA at the termination of protein biosynthesis. May increase the efficiency of translation by recycling ribosomes from one round of translation to another. The sequence is that of Ribosome-recycling factor from Edwardsiella ictaluri (strain 93-146).